The chain runs to 195 residues: HTH-type transcriptional regulator BetI (195 aa).

The region spanning 8–68 is the HTH tetR-type domain; the sequence is PIRRQQLIEA…ATMRYLISHL (61 aa). The H-T-H motif DNA-binding region spans 31-50; sequence SIVQIARRAGVSNGIISHYF.

Its pathway is amine and polyamine biosynthesis; betaine biosynthesis via choline pathway [regulation]. In terms of biological role, repressor involved in the biosynthesis of the osmoprotectant glycine betaine. It represses transcription of the choline transporter BetT and the genes of BetAB involved in the synthesis of glycine betaine. This Pectobacterium atrosepticum (strain SCRI 1043 / ATCC BAA-672) (Erwinia carotovora subsp. atroseptica) protein is HTH-type transcriptional regulator BetI.